We begin with the raw amino-acid sequence, 609 residues long: mRNA-decapping enzyme 1B (609 aa).

The residue at position 2 (Ala-2) is an N-acetylalanine. Residue Ser-147 is modified to Phosphoserine. Tyr-191 carries the post-translational modification Phosphotyrosine. Disordered stretches follow at residues 201–222 (PVKPSENQQQRIPQPNQTLDPE) and 243–264 (TVEPPQTLHQQQQQQQEKLPIR). Residues 205–219 (SENQQQRIPQPNQTL) are compositionally biased toward polar residues. A phosphoserine mark is found at Ser-272 and Ser-333. Disordered stretches follow at residues 326–345 (TGPVRPGSPHNIGTSRGVQN) and 359–438 (TPGA…SSGV). Positions 336 to 345 (NIGTSRGVQN) are enriched in polar residues. The span at 368-378 (PSTPAPASSAA) shows a compositional bias: low complexity. Phosphothreonine is present on Thr-389. The segment covering 418–438 (QSTLPRQTLPISGNQTGSSGV) has biased composition (polar residues). Residues Ser-440 and Ser-503 each carry the phosphoserine modification.

This sequence belongs to the DCP1 family. In terms of assembly, interacts with DCP1A.

The protein localises to the cytoplasm. It localises to the nucleus. The catalysed reaction is a 5'-end (N(7)-methyl 5'-triphosphoguanosine)-ribonucleoside in mRNA + H2O = N(7)-methyl-GDP + a 5'-end phospho-ribonucleoside in mRNA + 2 H(+). Its function is as follows. May play a role in the degradation of mRNAs, both in normal mRNA turnover and in nonsense-mediated mRNA decay. May remove the 7-methyl guanine cap structure from mRNA molecules, yielding a 5'-phosphorylated mRNA fragment and 7m-GDP. This chain is mRNA-decapping enzyme 1B (DCP1B), found in Pongo abelii (Sumatran orangutan).